Reading from the N-terminus, the 1360-residue chain is MAYSFTEKKRIRNNFGSRESILTEPDLLAIQIDSFNSFIQADNKIKQDIGLHNVLQSVFPITAVNGYAQIEYVDYQLKEPKFNVEECKLRGVTFASTLRVKLNLVLFDKNGSTLKKKRKVKQIIEEDVYLGQLPLMTETGTFVINGTERVVVSQLHRSPGVIFEHDKGKTHSSGKILFSSRIIPYRGSWLDFEYDHHEHLYVRIDRRRKLPVTTLLRAMGLSSEDILETFFEKTPVKLKAKSCDLSMLPIHLQRTIAEFDIVVNQHVVVEKGRRITAKHVKLLGKAGIKSINAPLEYLLDKVICADIINKDTGEILISANTITSEEVLELLNTNKVKKIEILYINSSETGAYISDTLRLDETQTEIEARMSIYHVMRPGEPATEDAVNLLFNNLFFKNDRYDLSKVGRMKLNRRLGISRETGEHVLTNDDIIRVIKLLINIKDGNDSVDDIDTLANRRVRAIGEMIENQFRIGLVRVEKAVREGLNLAETDELTPQDLINSKPVSAAVREFFGSSQLSQFMDQVNPLSGVTHKRRISALGPGGLTRERAGFEVRDVHPSHYGRLCPIETPEGPNIGLINTLAVYAKTNSYGFLETPYQIVKNGKVTKEVIYVSAIDEITHTIAQANALVDDRGKLMDDLISCRHKNEFVLVDSSEVTLIDIDSKQISSVAASLIPFLEHDDANRALMGSNMQRQAVPVLKAEKPLVGTGIERVVAKDSRVCVTAKHGGVVEAVDASRIVIRVDSKKTKANELGVDIYNLTKYSRSNQNTCINQKPLVRTGDKITFGDVLADGPSTDMGELALGQNMKIAFMPWNGYNFEDSILISEKVVQEDRYTTIHIEELTAYSRDTKLGPEEITSDIPNVSESALSKLDEVGVVYVGARVKGGDILVGKVTPKSETVLSPEEKLLRAIFGEKANNVKDSSLRIGASKSGVVIDVQVFTRDRVEKDIRALSIDAERLERIKKDIDDEFSIIDGDIFRRIRLKLLGNVLSKAIGDIRIGERLSIKLMKKFDNKDIAKFKVENATVNKEVAVLVKQAKAKKVEFEKFFKKEKAKINEGAELPPGVMKMVKVYVATRKTLQVGDKMAGRHGNKGVISRVSPVEDMPYLADGSTIDIVLNPLGVPSRMNVGQVLEVHLGYAAKGLGYKIAAILDERRPDMVKQIRVFLDKVYNLHGKKEDLTLFSNEEIIELANNLREGVPMATPVFDGIREQDIKSLLRLADLPESGQEQLYDGRTGEPFDRHVTVGYMHMLKLNHLVDDKMHARSTGPYSLVTQQPLSGKAQFGGQRFGEMEVWALEAYGAAHTLREMLTVKSDDVAGRAKMYKSIVDGKNLTESVMPESFNVLVKEIRSLGIDVELEQH.

This sequence belongs to the RNA polymerase beta chain family. In terms of assembly, the RNAP catalytic core consists of 2 alpha, 1 beta, 1 beta' and 1 omega subunit. When a sigma factor is associated with the core the holoenzyme is formed, which can initiate transcription.

It catalyses the reaction RNA(n) + a ribonucleoside 5'-triphosphate = RNA(n+1) + diphosphate. Its function is as follows. DNA-dependent RNA polymerase catalyzes the transcription of DNA into RNA using the four ribonucleoside triphosphates as substrates. This is DNA-directed RNA polymerase subunit beta from Vesicomyosocius okutanii subsp. Calyptogena okutanii (strain HA).